The sequence spans 358 residues: MGLNLTLTKLPGNELYSQASHTANSTSEGHGKNSTLHNKFDTIILPVLYLVIFVASILLNGLAVWIFFHIRNKTSFIFYLKNIVVADLIMTLTFPFRIVRDAGFGPWYFEFILCRYTSVLFYANMYTSIVFLGLISVDRYLKVVKPFGDSRMYSITFTKVLSVCVWVIMAILSLPNIILTNGQPTKENIHDCMKLKSPLGAKWHMAVTYVDSCLFVAVLVILIGCYIAISRYIHKSSRQFISQSSRKRKHNQSIRVVVAVFFTCFLPYHLCRIPFTFSNLDRLLDESAHKILYYCKEMTLFLSACNVCLDPIIYFFMCKSFSRRLFKKSNIRTRSESIRSLQSVRRSEVRIYYDYTDV.

Residues 1 to 47 (MGLNLTLTKLPGNELYSQASHTANSTSEGHGKNSTLHNKFDTIILPV) are Extracellular-facing. Asparagine 4, asparagine 24, and asparagine 33 each carry an N-linked (GlcNAc...) asparagine glycan. A helical transmembrane segment spans residues 48-68 (LYLVIFVASILLNGLAVWIFF). Residues 69-75 (HIRNKTS) lie on the Cytoplasmic side of the membrane. Residues 76–96 (FIFYLKNIVVADLIMTLTFPF) form a helical membrane-spanning segment. At 97-116 (RIVRDAGFGPWYFEFILCRY) the chain is on the extracellular side. Cysteine 114 and cysteine 192 are oxidised to a cystine. A helical transmembrane segment spans residues 117 to 137 (TSVLFYANMYTSIVFLGLISV). Over 138-159 (DRYLKVVKPFGDSRMYSITFTK) the chain is Cytoplasmic. The chain crosses the membrane as a helical span at residues 160-180 (VLSVCVWVIMAILSLPNIILT). Over 181 to 208 (NGQPTKENIHDCMKLKSPLGAKWHMAVT) the chain is Extracellular. A helical membrane pass occupies residues 209–229 (YVDSCLFVAVLVILIGCYIAI). Residues 230 to 256 (SRYIHKSSRQFISQSSRKRKHNQSIRV) are Cytoplasmic-facing. A helical transmembrane segment spans residues 257-277 (VVAVFFTCFLPYHLCRIPFTF). Residues 278–297 (SNLDRLLDESAHKILYYCKE) lie on the Extracellular side of the membrane. The chain crosses the membrane as a helical span at residues 298–318 (MTLFLSACNVCLDPIIYFFMC). Topologically, residues 319 to 358 (KSFSRRLFKKSNIRTRSESIRSLQSVRRSEVRIYYDYTDV) are cytoplasmic.

This sequence belongs to the G-protein coupled receptor 1 family. As to expression, expressed at high levels in testis and brain and to a lesser extent placenta, ovary, prostate, and skeletal muscle but not in heart, lung, kidney, liver or intestine.

It is found in the cell membrane. Functionally, receptor for lysophosphatidic acid (LPA). Necessary for p53/TP53-dependent survival in response to DNA damage. Promotes the Hippo-YAP signaling pathway and thereby modulates glycolysis and oxidative stress production by the regulation of hexokinase-2/HK2. This chain is G-protein coupled receptor 87 (Gpr87), found in Mus musculus (Mouse).